Reading from the N-terminus, the 152-residue chain is Protein SprT-like (152 aa).

The region spanning 7-147 (QRLVEEVSLQ…CGKCKGKLKP (141 aa)) is the SprT-like domain. His-67 serves as a coordination point for Zn(2+). Glu-68 is a catalytic residue. His-71 provides a ligand contact to Zn(2+).

It belongs to the SprT family. Zn(2+) serves as cofactor.

The protein resides in the cytoplasm. In Bacillus cereus (strain ATCC 14579 / DSM 31 / CCUG 7414 / JCM 2152 / NBRC 15305 / NCIMB 9373 / NCTC 2599 / NRRL B-3711), this protein is Protein SprT-like.